Reading from the N-terminus, the 387-residue chain is S-adenosylmethionine synthase (387 aa).

Histidine 15 contributes to the ATP binding site. Position 17 (aspartate 17) interacts with Mg(2+). Residue glutamate 43 coordinates K(+). Residues glutamate 56 and glutamine 99 each contribute to the L-methionine site. Residues 99-109 (QSPDIAQGVNA) form a flexible loop region. ATP-binding positions include 166 to 168 (DAK), 232 to 233 (RF), aspartate 241, 247 to 248 (RK), alanine 264, and lysine 268. Aspartate 241 is an L-methionine binding site. L-methionine is bound at residue lysine 272.

This sequence belongs to the AdoMet synthase family. Homotetramer; dimer of dimers. Mg(2+) is required as a cofactor. K(+) serves as cofactor.

The protein localises to the cytoplasm. It catalyses the reaction L-methionine + ATP + H2O = S-adenosyl-L-methionine + phosphate + diphosphate. It functions in the pathway amino-acid biosynthesis; S-adenosyl-L-methionine biosynthesis; S-adenosyl-L-methionine from L-methionine: step 1/1. Functionally, catalyzes the formation of S-adenosylmethionine (AdoMet) from methionine and ATP. The overall synthetic reaction is composed of two sequential steps, AdoMet formation and the subsequent tripolyphosphate hydrolysis which occurs prior to release of AdoMet from the enzyme. This Dechloromonas aromatica (strain RCB) protein is S-adenosylmethionine synthase.